The following is a 350-amino-acid chain: Autophagy-related protein 3 (350 aa).

Positions 85 to 166 are flexible region; the sequence is NFAGDAGLEE…EEDDEAIIRD (82 aa). The segment at 97 to 171 is disordered; the sequence is VDDGDEFKGS…AIIRDTDASG (75 aa). Basic and acidic residues predominate over residues 102–113; it reads EFKGSKGDDDGW. Residues 146–161 are compositionally biased toward acidic residues; sequence DDDDDIPDMEDEEDDE. Cysteine 244 (glycyl thioester intermediate) is an active-site residue. Positions 248-326 are handle region; it reads PVMKTLLDRA…DQEVAIRVDQ (79 aa). N6-acetyllysine is present on residues lysine 262 and lysine 267.

Belongs to the ATG3 family. As to quaternary structure, monomer. Interacts with ATG8 through an intermediate thioester bond through the C-terminal Gly of ATG8. Also interacts with the 40 amino acid C-terminal region of the E1-like ATG7 enzyme. Also interacts with the ATG12-ATG5 conjugate. Interacts with HAT1. Acetylated by HAT1 at Lys-262 and Lys-267, which affects the interaction with ATG8 and prevents autophagy during both appressorium development and nutrient starvation.

It is found in the preautophagosomal structure. It localises to the cytoplasm. Functionally, E2 conjugating enzyme required for the cytoplasm to vacuole transport (Cvt) and autophagy. Required for selective autophagic degradation of the nucleus (nucleophagy) as well as for mitophagy which contributes to regulate mitochondrial quantity and quality by eliminating the mitochondria to a basal level to fulfill cellular energy requirements and preventing excess ROS production. Responsible for the E2-like covalent binding of phosphatidylethanolamine to the C-terminal Gly of ATG8. The ATG12-ATG5 conjugate plays a role of an E3 and promotes the transfer of ATG8 from ATG3 to phosphatidylethanolamine (PE). This step is required for the membrane association of ATG8. The formation of the ATG8-phosphatidylethanolamine conjugate is essential for autophagy and for the cytoplasm to vacuole transport (Cvt). The ATG8-PE conjugate mediates tethering between adjacent membranes and stimulates membrane hemifusion, leading to expansion of the autophagosomal membrane during autophagy. Plays a role in appressorium formation and pathogenicity. This is Autophagy-related protein 3 from Pyricularia oryzae (strain 70-15 / ATCC MYA-4617 / FGSC 8958) (Rice blast fungus).